Consider the following 1137-residue polypeptide: Guanine nucleotide exchange factor DBS (1137 aa).

The 173-residue stretch at 52–224 (TAMATDEIMH…DLGGTLDYCH (173 aa)) folds into the CRAL-TRIO domain. Residues 351–456 (LQLRHFEQGF…IARRRGLLSK (106 aa)) form a Spectrin repeat. Phosphoserine is present on residues serine 457 and serine 480. Residues 503–529 (LETGAENKIQELNAIYKEYESILNQDL) are a coiled coil. The disordered stretch occupies residues 557–625 (LAARQTRPVQ…QGRGSAGEEE (69 aa)). Over residues 584-597 (GIRRGSENSSSEGG) the composition is skewed to low complexity. Residues 607–616 (AKSEMSESRQ) are compositionally biased toward basic and acidic residues. Serine 620 is modified (phosphoserine). Residues 631 to 811 (LRRHVMSELL…LGILKAVNDS (181 aa)) enclose the DH domain. Residues 829 to 945 (KLLMQGSFSV…WVNEIRKVLT (117 aa)) enclose the PH domain. Disordered regions lie at residues 955-1058 (SQHR…LVPG) and 1116-1137 (GPSG…RAHP). Over residues 962-977 (QSQSLPLPAPTSTSPS) the composition is skewed to low complexity. Residues serine 1033, serine 1034, serine 1041, and serine 1042 each carry the phosphoserine modification. Positions 1055–1116 (LVPGKYTVVA…PASSLSVRLG (62 aa)) constitute an SH3 domain. Positions 1119-1128 (GSAQCLSSSG) are enriched in polar residues.

This sequence belongs to the MCF2 family. In terms of assembly, interacts with GTP-bound RAC1. Interacts with CDC42. Interacts with RHOA. Interacts with CCPG1, which results in specific inhibition of its exchange activity toward RHOA, but does not affect its activity on CDC42.

Its subcellular location is the cytoplasm. It is found in the cell membrane. The protein localises to the endomembrane system. In terms of biological role, guanine nucleotide exchange factor that catalyzes guanine nucleotide exchange on RHOA and CDC42, and thereby contributes to the regulation of RHOA and CDC42 signaling pathways. Seems to lack activity with RAC1. Becomes activated and highly tumorigenic by truncation of the N-terminus. Isoform 5 activates CDC42. Does not catalyze guanine nucleotide exchange on CDC42. This is Guanine nucleotide exchange factor DBS (MCF2L) from Homo sapiens (Human).